A 255-amino-acid polypeptide reads, in one-letter code: Enolase-phosphatase E1 (255 aa).

Positions 22 and 24 each coordinate Mg(2+). Residues 136 to 137 and Lys-173 contribute to the substrate site; that span reads SS. Asp-199 serves as a coordination point for Mg(2+).

Belongs to the HAD-like hydrolase superfamily. MasA/MtnC family. As to quaternary structure, monomer. Mg(2+) is required as a cofactor.

It localises to the cytoplasm. The protein resides in the nucleus. The enzyme catalyses 5-methylsulfanyl-2,3-dioxopentyl phosphate + H2O = 1,2-dihydroxy-5-(methylsulfanyl)pent-1-en-3-one + phosphate. It functions in the pathway amino-acid biosynthesis; L-methionine biosynthesis via salvage pathway; L-methionine from S-methyl-5-thio-alpha-D-ribose 1-phosphate: step 3/6. The protein operates within amino-acid biosynthesis; L-methionine biosynthesis via salvage pathway; L-methionine from S-methyl-5-thio-alpha-D-ribose 1-phosphate: step 4/6. Its function is as follows. Bifunctional enzyme that catalyzes the enolization of 2,3-diketo-5-methylthiopentyl-1-phosphate (DK-MTP-1-P) into the intermediate 2-hydroxy-3-keto-5-methylthiopentenyl-1-phosphate (HK-MTPenyl-1-P), which is then dephosphorylated to form the acireductone 1,2-dihydroxy-3-keto-5-methylthiopentene (DHK-MTPene). The polypeptide is Enolase-phosphatase E1 (Verticillium alfalfae (strain VaMs.102 / ATCC MYA-4576 / FGSC 10136) (Verticillium wilt of alfalfa)).